The sequence spans 1293 residues: Phosphoribosylformylglycinamidine synthase (1293 aa).

ATP is bound by residues 305-316 (GAATGSGGEIRD) and Ala-676. The tract at residues 305–327 (GAATGSGGEIRDEGATGRGSKPK) is disordered. Residues Asp-677, Glu-716, Asn-720, and Asp-884 each contribute to the Mg(2+) site. Ser-886 is an ATP binding site. The 254-residue stretch at 1040–1293 (MAILREQGVN…MFRNARVNLG (254 aa)) folds into the Glutamine amidotransferase type-1 domain. The active-site Nucleophile is Cys-1133. Residues His-1258 and Glu-1260 contribute to the active site.

This sequence in the N-terminal section; belongs to the FGAMS family. As to quaternary structure, monomer.

The protein resides in the cytoplasm. It catalyses the reaction N(2)-formyl-N(1)-(5-phospho-beta-D-ribosyl)glycinamide + L-glutamine + ATP + H2O = 2-formamido-N(1)-(5-O-phospho-beta-D-ribosyl)acetamidine + L-glutamate + ADP + phosphate + H(+). Its pathway is purine metabolism; IMP biosynthesis via de novo pathway; 5-amino-1-(5-phospho-D-ribosyl)imidazole from N(2)-formyl-N(1)-(5-phospho-D-ribosyl)glycinamide: step 1/2. Functionally, phosphoribosylformylglycinamidine synthase involved in the purines biosynthetic pathway. Catalyzes the ATP-dependent conversion of formylglycinamide ribonucleotide (FGAR) and glutamine to yield formylglycinamidine ribonucleotide (FGAM) and glutamate. This Shewanella oneidensis (strain ATCC 700550 / JCM 31522 / CIP 106686 / LMG 19005 / NCIMB 14063 / MR-1) protein is Phosphoribosylformylglycinamidine synthase.